Consider the following 428-residue polypeptide: Adenylosuccinate synthetase (428 aa).

Residues 12-18 and 40-42 contribute to the GTP site; these read GDEGKGK and GHT. The active-site Proton acceptor is Asp13. Residues Asp13 and Gly40 each coordinate Mg(2+). Residues 13-16, 38-41, Thr128, Arg142, Gln222, Thr237, and Arg301 each bind IMP; these read DEGK and NAGH. His41 functions as the Proton donor in the catalytic mechanism. Position 297 to 303 (297 to 303) interacts with substrate; it reads VNTGRAR. Residues Arg303, 329–331, and 411–413 each bind GTP; these read KLD and STS.

Belongs to the adenylosuccinate synthetase family. In terms of assembly, homodimer. The cofactor is Mg(2+).

The protein resides in the cytoplasm. The catalysed reaction is IMP + L-aspartate + GTP = N(6)-(1,2-dicarboxyethyl)-AMP + GDP + phosphate + 2 H(+). It functions in the pathway purine metabolism; AMP biosynthesis via de novo pathway; AMP from IMP: step 1/2. Its function is as follows. Plays an important role in the de novo pathway of purine nucleotide biosynthesis. Catalyzes the first committed step in the biosynthesis of AMP from IMP. This is Adenylosuccinate synthetase from Caulobacter sp. (strain K31).